The following is a 141-amino-acid chain: HTH-type transcriptional repressor NsrR (141 aa).

Residues 2–129 form the HTH rrf2-type domain; the sequence is QLTSFTDYGL…DNYTLADLVE (128 aa). A DNA-binding region (H-T-H motif) is located at residues 28-51; it reads ISEVTDVYGVSRNHMVKIINQLSR. 3 residues coordinate [2Fe-2S] cluster: cysteine 91, cysteine 96, and cysteine 102.

It depends on [2Fe-2S] cluster as a cofactor.

Its function is as follows. Nitric oxide-sensitive repressor of genes involved in protecting the cell against nitrosative stress. May require iron for activity. The chain is HTH-type transcriptional repressor NsrR from Escherichia coli O157:H7 (strain EC4115 / EHEC).